Consider the following 230-residue polypeptide: Ureidoacrylate amidohydrolase RutB (230 aa).

Asp-24 (proton acceptor) is an active-site residue. Lys-133 is a catalytic residue. The active-site Nucleophile is the Cys-166.

Belongs to the isochorismatase family. RutB subfamily.

It catalyses the reaction (Z)-3-ureidoacrylate + H2O + H(+) = (Z)-3-aminoacrylate + NH4(+) + CO2. It carries out the reaction (Z)-3-ureidoacrylate + H2O = (Z)-3-aminoacrylate + carbamate + H(+). The catalysed reaction is (Z)-2-methylureidoacrylate + H2O + H(+) = (Z)-2-methylaminoacrylate + NH4(+) + CO2. Hydrolyzes ureidoacrylate to form aminoacrylate and carbamate. The carbamate hydrolyzes spontaneously, thereby releasing one of the nitrogen atoms of the pyrimidine ring as ammonia and one of its carbon atoms as CO2. The polypeptide is Ureidoacrylate amidohydrolase RutB (Escherichia coli O157:H7).